The primary structure comprises 403 residues: S-adenosylmethionine:tRNA ribosyltransferase-isomerase (403 aa).

It belongs to the QueA family. Monomer.

Its subcellular location is the cytoplasm. It carries out the reaction 7-aminomethyl-7-carbaguanosine(34) in tRNA + S-adenosyl-L-methionine = epoxyqueuosine(34) in tRNA + adenine + L-methionine + 2 H(+). It participates in tRNA modification; tRNA-queuosine biosynthesis. Functionally, transfers and isomerizes the ribose moiety from AdoMet to the 7-aminomethyl group of 7-deazaguanine (preQ1-tRNA) to give epoxyqueuosine (oQ-tRNA). This Psychrobacter arcticus (strain DSM 17307 / VKM B-2377 / 273-4) protein is S-adenosylmethionine:tRNA ribosyltransferase-isomerase.